The sequence spans 1134 residues: MMS19 nucleotide excision repair protein homolog (1134 aa).

HEAT repeat units lie at residues 959 to 998 (QRCFSTIVPILESLIMNSQTSLSRTMLHVALAHVISNVPV), 1002 to 1047 (LDNT…KGQQ), 1050 to 1089 (SDNAHIIIECLIKLTSYPHLMVVRETSIQCLVALLELPHR), and 1092 to 1130 (YPFRREVLQAIEKSLDDPKRKVREEAIRCRQAWASITSG).

The protein belongs to the MET18/MMS19 family. Part of a complex composed of AE7, CIA1, MMS19 and NAR1. Interacts with AE7.

It is found in the nucleus. It localises to the cytoplasm. Functionally, may select specific target apoproteins to which a Fe-S cluster produced by the cytosolic iron-sulfur (Fe-S) protein assembly (CIA) pathway is transferred. This chain is MMS19 nucleotide excision repair protein homolog, found in Arabidopsis thaliana (Mouse-ear cress).